Consider the following 345-residue polypeptide: Splicing factor YJU2 (345 aa).

The Zn(2+) site is built by C43, C46, C80, and C83. Residues 205-345 (KRLRDSDSEE…YSDSDDSSSD (141 aa)) are disordered. Positions 217-232 (ENAKERSKKHIADKPT) are enriched in basic and acidic residues. Low complexity-rich tracts occupy residues 308-317 (SSITSSSASS) and 327-337 (GSSLGLLGAYS).

Belongs to the CWC16 family. YJU2 subfamily. In terms of assembly, component of the spliceosome. Present in the activated B complex, the catalytically activated B* complex which catalyzes the branching, the catalytic step 1 C complex catalyzing the exon ligation, and the postcatalytic P complex containing the ligated exons (mRNA) and the excised lariat intron.

The protein localises to the nucleus. Its function is as follows. Part of the spliceosome which catalyzes two sequential transesterification reactions, first the excision of the non-coding intron from pre-mRNA and then the ligation of the coding exons to form the mature mRNA. Plays a role in stabilizing the structure of the spliceosome catalytic core and docking of the branch helix into the active site, producing 5'-exon and lariat intron-3'-intermediates. May protect cells from TP53-dependent apoptosis upon dsDNA break damage through association with PRP19-CD5L complex. The chain is Splicing factor YJU2 from Danio rerio (Zebrafish).